A 168-amino-acid polypeptide reads, in one-letter code: G/U mismatch-specific DNA glycosylase (168 aa).

The protein belongs to the uracil-DNA glycosylase (UDG) superfamily. TDG/mug family. As to quaternary structure, binds DNA as a monomer.

The protein resides in the cytoplasm. The enzyme catalyses Specifically hydrolyzes mismatched double-stranded DNA and polynucleotides, releasing free uracil.. In terms of biological role, excises ethenocytosine and uracil, which can arise by alkylation or deamination of cytosine, respectively, from the corresponding mispairs with guanine in ds-DNA. It is capable of hydrolyzing the carbon-nitrogen bond between the sugar-phosphate backbone of the DNA and the mispaired base. The complementary strand guanine functions in substrate recognition. Required for DNA damage lesion repair in stationary-phase cells. The chain is G/U mismatch-specific DNA glycosylase from Escherichia fergusonii (strain ATCC 35469 / DSM 13698 / CCUG 18766 / IAM 14443 / JCM 21226 / LMG 7866 / NBRC 102419 / NCTC 12128 / CDC 0568-73).